The sequence spans 224 residues: Enolase-phosphatase E1 (224 aa).

It belongs to the HAD-like hydrolase superfamily. MasA/MtnC family. Monomer. Requires Mg(2+) as cofactor.

It catalyses the reaction 5-methylsulfanyl-2,3-dioxopentyl phosphate + H2O = 1,2-dihydroxy-5-(methylsulfanyl)pent-1-en-3-one + phosphate. Its pathway is amino-acid biosynthesis; L-methionine biosynthesis via salvage pathway; L-methionine from S-methyl-5-thio-alpha-D-ribose 1-phosphate: step 3/6. It functions in the pathway amino-acid biosynthesis; L-methionine biosynthesis via salvage pathway; L-methionine from S-methyl-5-thio-alpha-D-ribose 1-phosphate: step 4/6. Its function is as follows. Bifunctional enzyme that catalyzes the enolization of 2,3-diketo-5-methylthiopentyl-1-phosphate (DK-MTP-1-P) into the intermediate 2-hydroxy-3-keto-5-methylthiopentenyl-1-phosphate (HK-MTPenyl-1-P), which is then dephosphorylated to form the acireductone 1,2-dihydroxy-3-keto-5-methylthiopentene (DHK-MTPene). The sequence is that of Enolase-phosphatase E1 from Thioalkalivibrio sulfidiphilus (strain HL-EbGR7).